A 547-amino-acid chain; its full sequence is Rho GTPase-activating protein 36 (547 aa).

The N-terminal stretch at 1–40 is a signal peptide; it reads MGGCIPFLKAARALCPRIMPPLLLLSAFIFLVSVLGGAPG. The Rho-GAP domain maps to 226–426; it reads MSLNPIAKQI…AMIDNWDVLF (201 aa). The tract at residues 485–547 is disordered; the sequence is AVLAQSKPSD…AKTGVSYFFP (63 aa). Residues 524–539 are compositionally biased toward basic and acidic residues; it reads EQDRPLLRVPREKEAK.

As to quaternary structure, may interacts (via the Rho-GAP domain) with the active form of RAC1. As to expression, detected in the outer root sheath of hair follicles at the level of the stem cell bulge, during the anagen and telogen phases of hair growth (at protein level).

Its function is as follows. GTPase activator for the Rho-type GTPases by converting them to an inactive GDP-bound state. This chain is Rho GTPase-activating protein 36 (ARHGAP36), found in Homo sapiens (Human).